The primary structure comprises 73 residues: Metallothionein (73 aa).

Residues cysteine 15, cysteine 20, cysteine 26, cysteine 28, cysteine 32, cysteine 34, cysteine 39, cysteine 46, cysteine 48, cysteine 52, cysteine 54, cysteine 58, cysteine 64, cysteine 66, cysteine 70, and cysteine 72 each coordinate Cd(2+).

The protein belongs to the metallothionein superfamily. Type 2 family.

In terms of biological role, the metallothioneins are involved in the cellular sequestration of toxic metal ions. The sequence is that of Metallothionein from Dreissena polymorpha (Zebra mussel).